The primary structure comprises 574 residues: Meiotically up-regulated gene 72 protein (574 aa).

The segment at 339–374 (VRAGTPQSSPNFNPAMRRSPVGAASRSPSRSTIGIS) is disordered. A Phosphothreonine modification is found at Thr-343. Residues 364-374 (RSPSRSTIGIS) show a composition bias toward polar residues. Position 392 is a phosphoserine (Ser-392). Disordered stretches follow at residues 422-451 (TSPSGLNPTGRPSRFGGRVRGNPLTMNKAG) and 495-574 (RNRR…RRMD). Over residues 541-554 (LYDTSRYPTRNSKP) the composition is skewed to polar residues.

The protein resides in the cytoplasm. Its function is as follows. Has a role in meiosis. The chain is Meiotically up-regulated gene 72 protein (mug72) from Schizosaccharomyces pombe (strain 972 / ATCC 24843) (Fission yeast).